The sequence spans 479 residues: Transcription factor CP2-like protein 1 (479 aa).

Positions 1–52 (MLFWHTQPEHYNQHNSGSYLRDVLALPIFKQEEPQLSPENGARLPPLQYVLC) are mediate transcriptional repression. Residues 43 to 280 (RLPPLQYVLC…PSPSYNGSPN (238 aa)) enclose the Grh/CP2 DB domain. Disordered regions lie at residues 219 to 248 (KPKG…YQPS) and 260 to 301 (WPDV…LPLG). Basic and acidic residues predominate over residues 221 to 245 (KGADRKQKTDREKMEKRTAQEKEKY). The segment at 261 to 365 (PDVPYQANNT…IRLFNAIKGR (105 aa)) is SAM2-like domain. A compositionally biased stretch (polar residues) spans 266 to 292 (QANNTPSPSYNGSPNSFGLREGNSSPN).

It belongs to the grh/CP2 family. CP2 subfamily. In terms of assembly, forms homohexamers via its SAM-like domain. Interacts with Mta1; which is indispensable for Tfcp2l1-mediated self-renewal-promoting effect and endoderm-inhibiting action. Highly expressed in placenta, testis, small intestine, kidney and stomach. Low levels of expression in lung, mesenteric lymph nodes, muscle, ovary, and thymus. No expression was detected in brain, heart, liver, and spleen. Expressed in eccrine glands in the palm. Expression is prominent in both kidney collecting ducts intercalated (IC) and principal (PC) cells. Also expressed in the thick limb of Henle and connecting segments of the nephron.

The protein localises to the nucleus. Transcription factor that facilitates establishment and maintenance of pluripotency in embryonic stem cells (ESCs). With Klf2, acts as the major effector of self-renewal that mediates induction of pluripotency downstream of LIF/Stat3 and Wnt/beta-catenin signaling. Required for normal duct development in the salivary gland and kidney. Coordinates the development of the kidney collecting ducts intercalated (IC) and principal (PC) cells, which regulate acid-base and salt-water homeostasis, respectively. Regulates the expression of IC genes including subunits B1 and D2 of the V-ATPase complex, Oxgr1, Ca12, Slc4a1, Aqp6 and IC-specific transcription factor Foxi1. Also regulates the expression of Jag1 and subsequent notch signaling in the collecting duct. Jag1 initiates notch signaling in PCs but inhibits notch signaling in ICs. Acts as a transcriptional suppressor that may suppress UBP1-mediated transcriptional activation. Modulates the placental expression of CYP11A1. This chain is Transcription factor CP2-like protein 1 (Tfcp2l1), found in Mus musculus (Mouse).